A 52-amino-acid polypeptide reads, in one-letter code: Large ribosomal subunit protein bL33 (52 aa).

The protein belongs to the bacterial ribosomal protein bL33 family.

This chain is Large ribosomal subunit protein bL33, found in Helicobacter acinonychis (strain Sheeba).